We begin with the raw amino-acid sequence, 337 residues long: Centromere protein N (337 aa).

2 positions are modified to phosphoserine: Ser226 and Ser233.

It belongs to the CENP-N/CHL4 family. As to quaternary structure, component of the CENPA-NAC complex, at least composed of CENPA, CENPC, CENPH, CENPM, CENPN, CENPT and CENPU. The CENPA-NAC complex interacts with the CENPA-CAD complex, composed of CENPI, CENPK, CENPL, CENPO, CENPP, CENPQ, CENPR and CENPS. Interacts directly with CENPA. Identified in a centromere complex containing histones H2A, H2B and H4, and at least CENPA, CENPB, CENPC, CENPT, CENPN, HJURP, SUPT16H, SSRP1 and RSF1.

The protein localises to the nucleus. Its subcellular location is the chromosome. The protein resides in the centromere. It localises to the kinetochore. Its function is as follows. Component of the CENPA-NAC (nucleosome-associated) complex, a complex that plays a central role in assembly of kinetochore proteins, mitotic progression and chromosome segregation. The CENPA-NAC complex recruits the CENPA-CAD (nucleosome distal) complex and may be involved in incorporation of newly synthesized CENPA into centromeres. CENPN is the first protein to bind specifically to CENPA nucleosomes and the direct binding of CENPA nucleosomes by CENPN is required for centromere assembly. Required for chromosome congression and efficiently align the chromosomes on a metaphase plate. The chain is Centromere protein N (Cenpn) from Mus musculus (Mouse).